Reading from the N-terminus, the 215-residue chain is Ras-related protein Rab-5A (215 aa).

Residues Ser-29, Ala-30, Gly-32, Lys-33, Ser-34, Ser-35, His-46, Glu-47, Thr-52, and Gly-78 each coordinate GTP. Position 34 (Ser-34) interacts with Mg(2+). 2 consecutive short sequence motifs (switch) follow at residues Gln-44–Ala-56 and Ala-77–Ala-93. A Mg(2+)-binding site is contributed by Thr-52. Ser-84 carries the post-translational modification Phosphoserine. Positions 133, 134, 136, 164, and 165 each coordinate GTP. Positions Leu-181–Asn-215 are disordered. Positions Glu-203 to Asn-215 are enriched in polar residues. Residues Cys-212 and Cys-213 are each lipidated (S-geranylgeranyl cysteine).

The protein belongs to the small GTPase superfamily. Rab family. In terms of assembly, interacts with GDI1; this promotes dissociation from membranes; phosphorylation at Ser-84 disrupts this interaction. Interacts with GDI2; phosphorylation at Ser-84 disrupts the interaction. Binds EEA1. Interacts with ALS2CL, SUN2, ZFYVE20 and RUFY1. Interacts with RIN1 and GAPVD1, which regulate its pathway, probably by acting as a GEF. Interacts with SGSM1 and SGSM3. Interacts with PIK3CB. Interacts with RABEP1 and RINL. Interacts with OCRL and INPP5F. May be a component of a complex composed of RAB5A, DYN2 and PIK3C3. Does not interact with the BLOC-3 complex (heterodimer of HPS1 and HPS4). Interacts with CLN5. Interacts with APPL2. Interacts with F8A1/F8A2/F8A3. Found in a complex with F8A1/F8A2/F8A3, HTT and RAB5A; mediates the recruitment of HTT by RAB5A onto early endosomes. Interacts with ATP9A. Interacts with PPP1R21; mediates the recruitment of FERRY complex by RAB5A onto early endosomes. It depends on Mg(2+) as a cofactor. In terms of processing, phosphorylation of Ser-84 in the switch II region by LRRK2 prevents the association of RAB regulatory proteins, including RAB GDP dissociation inhibitors GDI1 and GDI2.

The protein resides in the cell membrane. It localises to the early endosome membrane. The protein localises to the melanosome. It is found in the cytoplasmic vesicle. Its subcellular location is the cell projection. The protein resides in the ruffle. It localises to the cytoplasm. The protein localises to the cytosol. It is found in the membrane. Its subcellular location is the phagosome membrane. The protein resides in the endosome membrane. It catalyses the reaction GTP + H2O = GDP + phosphate + H(+). Its activity is regulated as follows. Regulated by guanine nucleotide exchange factors (GEFs) including RINL, which promote the exchange of bound GDP for free GTP. Regulated by GTPase activating proteins (GAPs) which increase the GTP hydrolysis activity. Inhibited by GDP dissociation inhibitors (GDIs). Its function is as follows. The small GTPases Rab are key regulators of intracellular membrane trafficking, from the formation of transport vesicles to their fusion with membranes. Rabs cycle between an inactive GDP-bound form and an active GTP-bound form that is able to recruit to membranes different sets of downstream effectors directly responsible for vesicle formation, movement, tethering and fusion. RAB5A is required for the fusion of plasma membranes and early endosomes. Contributes to the regulation of filopodia extension. Required for the exosomal release of SDCBP, CD63, PDCD6IP and syndecan. Regulates maturation of apoptotic cell-containing phagosomes, probably downstream of DYN2 and PIK3C3. This is Ras-related protein Rab-5A (RAB5A) from Canis lupus familiaris (Dog).